A 309-amino-acid chain; its full sequence is Taste receptor type 2 member 124 (309 aa).

The Extracellular segment spans residues 1–7; the sequence is MVSVLHS. Residues 8–28 traverse the membrane as a helical segment; the sequence is ISTIIIIAEFVWGNLSNGLIV. Topologically, residues 29 to 46 are cytoplasmic; the sequence is LKNCLDWINIKELSTLDQ. The helical transmembrane segment at 47 to 67 threads the bilayer; the sequence is ILILLAISRISLIWETLLMWV. The Extracellular portion of the chain corresponds to 68-81; the sequence is KDKLISSITIEELK. The helical transmembrane segment at 82–102 threads the bilayer; sequence MIMFSFMLSSHFSLWLATALS. Residues 103–127 lie on the Cytoplasmic side of the membrane; that stretch reads TFYLFRIANCSWQIFLYLKWRLKHL. A helical transmembrane segment spans residues 128–148; it reads IVQMLLGSVMFLIANIIQITI. Over 149–182 the chain is Extracellular; that stretch reads TLEKRFYQYKGNTSVNSIQNEFALLIEMMLFNMT. N-linked (GlcNAc...) asparagine glycosylation is found at N160 and N180. Residues 183-203 form a helical membrane-spanning segment; sequence IFSVIPFLLALISFFLLIFSL. Over 204–227 the chain is Cytoplasmic; sequence WKHLQRMQLNSREDRDPSTKAHRN. The helical transmembrane segment at 228–248 threads the bilayer; that stretch reads ALGIMVSFLLLYTMYVLSLLI. The Extracellular segment spans residues 249–261; sequence SWIAQKNQSELVH. N-linked (GlcNAc...) asparagine glycosylation occurs at N255. A helical membrane pass occupies residues 262–282; sequence IICMITSLLNPSVHSSILILG. Over 283–309 the chain is Cytoplasmic; sequence NFKLKQSSLCILRHLGCRLKSQNTPTT.

This sequence belongs to the G-protein coupled receptor T2R family.

The protein localises to the membrane. Its function is as follows. Putative taste receptor which may play a role in the perception of bitterness. The chain is Taste receptor type 2 member 124 from Rattus norvegicus (Rat).